Reading from the N-terminus, the 392-residue chain is Formate-dependent phosphoribosylglycinamide formyltransferase (392 aa).

N(1)-(5-phospho-beta-D-ribosyl)glycinamide is bound by residues 22 to 23 (EL) and Glu82. ATP-binding positions include Arg114, Lys155, 160–165 (SSGHGQ), 195–198 (EGFI), and Glu203. Positions 119 to 307 (RLAAEELGLK…QFALHARAIL (189 aa)) constitute an ATP-grasp domain. 2 residues coordinate Mg(2+): Glu266 and Glu278. N(1)-(5-phospho-beta-D-ribosyl)glycinamide-binding positions include Asp285, Lys355, and 362–363 (RR).

It belongs to the PurK/PurT family. Homodimer.

Its subcellular location is the cell inner membrane. It carries out the reaction N(1)-(5-phospho-beta-D-ribosyl)glycinamide + formate + ATP = N(2)-formyl-N(1)-(5-phospho-beta-D-ribosyl)glycinamide + ADP + phosphate + H(+). It participates in purine metabolism; IMP biosynthesis via de novo pathway; N(2)-formyl-N(1)-(5-phospho-D-ribosyl)glycinamide from N(1)-(5-phospho-D-ribosyl)glycinamide (formate route): step 1/1. Involved in the de novo purine biosynthesis. Catalyzes the transfer of formate to 5-phospho-ribosyl-glycinamide (GAR), producing 5-phospho-ribosyl-N-formylglycinamide (FGAR). Formate is provided by PurU via hydrolysis of 10-formyl-tetrahydrofolate. The polypeptide is Formate-dependent phosphoribosylglycinamide formyltransferase (Mannheimia haemolytica (Pasteurella haemolytica)).